Here is a 461-residue protein sequence, read N- to C-terminus: Elongation factor 1-alpha, oocyte form (461 aa).

Position 2 is a n,N,N-trimethylglycine (glycine 2). A tr-type G domain is found at 5 to 242 (KIHINIVVIG…DCIIPPQRPT (238 aa)). The tract at residues 14–21 (GHVDSGKS) is G1. 14–21 (GHVDSGKS) contacts GTP. The segment at 70–74 (GITID) is G2. Positions 91 to 94 (DAPG) are G3. Residues 91–95 (DAPGH) and 153–156 (NKMD) contribute to the GTP site. Residues 153 to 156 (NKMD) are G4. The tract at residues 194–196 (SGW) is G5. Glutamate 301 and glutamate 374 each carry 5-glutamyl glycerylphosphorylethanolamine.

It belongs to the TRAFAC class translation factor GTPase superfamily. Classic translation factor GTPase family. EF-Tu/EF-1A subfamily. As to expression, oocyte.

The protein resides in the cytoplasm. Its function is as follows. This protein promotes the GTP-dependent binding of aminoacyl-tRNA to the A-site of ribosomes during protein biosynthesis. The polypeptide is Elongation factor 1-alpha, oocyte form (eef1ao) (Xenopus laevis (African clawed frog)).